The following is a 457-amino-acid chain: Ig mu chain C region (457 aa).

The tract at residues 1–105 (SSSAPLLFPL…GEKEKKVELQ (105 aa)) is CH1. C27 and C89 form a disulfide bridge. 2 N-linked (GlcNAc...) asparagine glycosylation sites follow: N45 and N113. The interval 106–220 (VTPELPPNVS…KNVSSVCMGD (115 aa)) is CH2. Residues C136 and C200 are joined by a disulfide bond. N212, N276, and N283 each carry an N-linked (GlcNAc...) asparagine glycan. The CH3 stretch occupies residues 221–326 (DTSTGISVFL…PLKQSLSRPK (106 aa)). Intrachain disulfides connect C248/C307 and C355/C417. Positions 327–457 (DVANDPPSVF…VLSDTASTCY (131 aa)) are CH4. The N-linked (GlcNAc...) asparagine glycan is linked to N444.

This is Ig mu chain C region from Suncus murinus (Asian house shrew).